The chain runs to 123 residues: Potassium voltage-gated channel subfamily E member 2 (123 aa).

N-linked (GlcNAc...) asparagine glycans are attached at residues asparagine 6 and asparagine 29. Residues 49-69 (VILYLMVMIGMFSFIVVAILV) form a helical membrane-spanning segment. Residues 70-123 (STVKSKRREHSQHPYHQYIVEDWQEKYKSQILHLEDSKATIHENMGATGFTVSP) are Cytoplasmic-facing.

The protein belongs to the potassium channel KCNE family. Interacts with KCNB1. Associates with KCNH2/ERG1. May associate with KCNQ2 and KCNQ3. Associates with HCN1 and probably HCN2. Heteromultimer with KCNC2. Interacts with KCNC2. Interacts with KCNQ1. Forms a heterooligomer complex with KCNQ1 that targets to the membrane raft and leading to currents with an apparently instantaneous activation, a rapid deactivation process and a linear current-voltage relationship and decreases the amplitude of the outward current.

The protein resides in the cell membrane. The protein localises to the apical cell membrane. Functionally, ancillary protein that functions as a regulatory subunit of the voltage-gated potassium (Kv) channel complex composed of pore-forming and potassium-conducting alpha subunits and of regulatory beta subunits. KCNE2 beta subunit modulates the gating kinetics and enhances stability of the channel complex. Alters the gating of the delayed rectifier Kv channel containing KCNB1 alpha subunit. Associates with KCNH2/HERG alpha subunit Kv channel to form the rapidly activating component of the delayed rectifying potassium current (IKr) in heart. May associate with KCNQ2 and/or KCNQ3 alpha subunits to modulate the native M-type current. May associate with HCN1 and HCN2 channel subunits to increase potassium current. Forms a heterooligomer complex with KCNQ1/KVLQT1 alpha subunits which leads to currents with an apparently instantaneous activation, a rapid deactivation process and a linear current-voltage relationship and decreases the amplitude of the outward current. KCNQ1-KCNE2 channel associates with Na(+)-coupled myo-inositol symporter in the apical membrane of choroid plexus epithelium and regulates the myo-inositol gradient between blood and cerebrospinal fluid with an impact on neuron excitability. This Mus musculus (Mouse) protein is Potassium voltage-gated channel subfamily E member 2.